A 464-amino-acid chain; its full sequence is Cysteine--tRNA ligase (464 aa).

Cys-29 contacts Zn(2+). The 'HIGH' region signature appears at 31–41 (ATVQGDPHIGH). Positions 207, 232, and 236 each coordinate Zn(2+). The short motif at 263–267 (KMSKS) is the 'KMSKS' region element. Residue Lys-266 coordinates ATP.

This sequence belongs to the class-I aminoacyl-tRNA synthetase family. As to quaternary structure, monomer. It depends on Zn(2+) as a cofactor.

It is found in the cytoplasm. It catalyses the reaction tRNA(Cys) + L-cysteine + ATP = L-cysteinyl-tRNA(Cys) + AMP + diphosphate. The protein is Cysteine--tRNA ligase of Rhodococcus jostii (strain RHA1).